The sequence spans 359 residues: 3-dehydroquinate synthase (359 aa).

Residues 71–76 (DGEAHK), 105–109 (GVIGD), 129–130 (TT), K142, K151, and 169–172 (TLHT) contribute to the NAD(+) site. Positions 184, 247, and 264 each coordinate Zn(2+).

Belongs to the sugar phosphate cyclases superfamily. Dehydroquinate synthase family. The cofactor is Co(2+). Zn(2+) is required as a cofactor. Requires NAD(+) as cofactor.

The protein resides in the cytoplasm. The enzyme catalyses 7-phospho-2-dehydro-3-deoxy-D-arabino-heptonate = 3-dehydroquinate + phosphate. It participates in metabolic intermediate biosynthesis; chorismate biosynthesis; chorismate from D-erythrose 4-phosphate and phosphoenolpyruvate: step 2/7. Catalyzes the conversion of 3-deoxy-D-arabino-heptulosonate 7-phosphate (DAHP) to dehydroquinate (DHQ). The chain is 3-dehydroquinate synthase from Neisseria meningitidis serogroup C (strain 053442).